The chain runs to 207 residues: Claudin-11 (207 aa).

Position 1 (Met-1) is a topological domain, cytoplasmic. A helical transmembrane segment spans residues 2 to 22 (VATCLQVVGFVTSFVGWIGVI). Topologically, residues 23 to 82 (VTTSTNDWVVTCGYTIPTCRKLDELGSKGLWADCVMATGLYHCKPLVDILILPGYVQACR) are extracellular. Residues 83–103 (ALMIAASVLGLPAILLLLTVL) traverse the membrane as a helical segment. The Cytoplasmic portion of the chain corresponds to 104 to 122 (PCIRMGHEPGVAKYRRAQL). Residues 123–143 (AGVLLILLALCAIVATIWFPV) traverse the membrane as a helical segment. The Extracellular segment spans residues 144–157 (CAHRETTIVSFGYS). Residues 158-178 (LYAGWIGAVLCLVGGCVILCC) traverse the membrane as a helical segment. Residues 179-207 (AGDAQAFGENRFYYSSGSSSPTHAKSAHV) are Cytoplasmic-facing. 4 positions are modified to phosphoserine: Ser-193, Ser-194, Ser-197, and Ser-198.

The protein belongs to the claudin family. As to quaternary structure, interacts with tetraspanin-3/TSPAN3. Interacts with OCLN.

It localises to the cell junction. The protein localises to the tight junction. It is found in the cell membrane. In terms of biological role, plays a major role in tight junction-specific obliteration of the intercellular space, through calcium-independent cell-adhesion activity. The protein is Claudin-11 (CLDN11) of Macaca fascicularis (Crab-eating macaque).